The chain runs to 76 residues: Omega/kappa-hexatoxin-Ar1g (76 aa).

A signal peptide spans 1 to 22 (MNTATGFIVLLVLATVLGGIEA). Positions 23-35 (GESHMRKDAMGRV) are excised as a propeptide. 3 disulfides stabilise this stretch: Cys-40–Cys-55, Cys-47–Cys-60, and Cys-54–Cys-74.

Belongs to the neurotoxin 08 (Shiva) family. 02 (omega/kappa toxin) subfamily. In terms of tissue distribution, expressed by the venom gland.

Its subcellular location is the secreted. In terms of biological role, toxin that may inhibit ion channels. This is Omega/kappa-hexatoxin-Ar1g from Atrax robustus (Sydney funnel-web spider).